Reading from the N-terminus, the 337-residue chain is uncharacterized protein (337 aa).

In terms of domain architecture, AFP-like spans 279-337 (SIVAKRNIKKGEYLSVDNISFKRPGRGIETKYLSIILNRKIKNDKEEDDIIYWDDLLGD).

To B.subtilis SpsE.

This is an uncharacterized protein from Methanocaldococcus jannaschii (strain ATCC 43067 / DSM 2661 / JAL-1 / JCM 10045 / NBRC 100440) (Methanococcus jannaschii).